The chain runs to 212 residues: Interleukin-6 (212 aa).

Positions 1 to 29 (MNSFSTSAFGPVAFSLGLLLVLPAAFPAP) are cleaved as a signal peptide. A disulfide bridge connects residues Cys-72 and Cys-78. The N-linked (GlcNAc...) asparagine glycan is linked to Asn-73. At Ser-81 the chain carries Phosphoserine; by FAM20C. A disulfide bond links Cys-101 and Cys-111.

Belongs to the IL-6 superfamily. Component of a hexamer of two molecules each of IL6, IL6R and IL6ST; first binds to IL6R to associate with the signaling subunit IL6ST. Interacts with IL6R (via the N-terminal ectodomain); this interaction may be affected by IL6R-binding with SORL1, hence decreasing IL6 cis signaling. Interacts with SORL1 (via the N-terminal ectodomain); this interaction leads to IL6 internalization and lysosomal degradation. May form a trimeric complex with the soluble SORL1 ectodomain and soluble IL6R receptor; this interaction might stabilize circulating IL6, hence promoting IL6 trans signaling. In terms of processing, N- and O-glycosylated. In terms of tissue distribution, produced by skeletal muscle.

The protein localises to the secreted. Its function is as follows. Cytokine with a wide variety of biological functions in immunity, tissue regeneration, and metabolism. Binds to IL6R, then the complex associates to the signaling subunit IL6ST/gp130 to trigger the intracellular IL6-signaling pathway. The interaction with the membrane-bound IL6R and IL6ST stimulates 'classic signaling', whereas the binding of IL6 and soluble IL6R to IL6ST stimulates 'trans-signaling'. Alternatively, 'cluster signaling' occurs when membrane-bound IL6:IL6R complexes on transmitter cells activate IL6ST receptors on neighboring receiver cells. IL6 is a potent inducer of the acute phase response. Rapid production of IL6 contributes to host defense during infection and tissue injury, but excessive IL6 synthesis is involved in disease pathology. In the innate immune response, is synthesized by myeloid cells, such as macrophages and dendritic cells, upon recognition of pathogens through toll-like receptors (TLRs) at the site of infection or tissue injury. In the adaptive immune response, is required for the differentiation of B cells into immunoglobulin-secreting cells. Plays a major role in the differentiation of CD4(+) T cell subsets. Essential factor for the development of T follicular helper (Tfh) cells that are required for the induction of germinal-center formation. Required to drive naive CD4(+) T cells to the Th17 lineage. Also required for proliferation of myeloma cells and the survival of plasmablast cells. In terms of biological role, acts as an essential factor in bone homeostasis and on vessels directly or indirectly by induction of VEGF, resulting in increased angiogenesis activity and vascular permeability. Induces, through 'trans-signaling' and synergistically with IL1B and TNF, the production of VEGF. Involved in metabolic controls, is discharged into the bloodstream after muscle contraction increasing lipolysis and improving insulin resistance. 'Trans-signaling' in central nervous system also regulates energy and glucose homeostasis. Mediates, through GLP-1, crosstalk between insulin-sensitive tissues, intestinal L cells and pancreatic islets to adapt to changes in insulin demand. Also acts as a myokine. Plays a protective role during liver injury, being required for maintenance of tissue regeneration. Also has a pivotal role in iron metabolism by regulating HAMP/hepcidin expression upon inflammation or bacterial infection. Through activation of IL6ST-YAP-NOTCH pathway, induces inflammation-induced epithelial regeneration. The chain is Interleukin-6 from Homo sapiens (Human).